The sequence spans 137 residues: Nucleoside diphosphate kinase (137 aa).

ATP is bound by residues Lys-9, Phe-57, Arg-85, Thr-91, Arg-102, and Asn-112. His-115 (pros-phosphohistidine intermediate) is an active-site residue.

The protein belongs to the NDK family. Homotetramer. The cofactor is Mg(2+).

The protein localises to the cytoplasm. The enzyme catalyses a 2'-deoxyribonucleoside 5'-diphosphate + ATP = a 2'-deoxyribonucleoside 5'-triphosphate + ADP. The catalysed reaction is a ribonucleoside 5'-diphosphate + ATP = a ribonucleoside 5'-triphosphate + ADP. Its function is as follows. Major role in the synthesis of nucleoside triphosphates other than ATP. The ATP gamma phosphate is transferred to the NDP beta phosphate via a ping-pong mechanism, using a phosphorylated active-site intermediate. The chain is Nucleoside diphosphate kinase from Leptospira interrogans serogroup Icterohaemorrhagiae serovar Lai (strain 56601).